Consider the following 230-residue polypeptide: Aquaporin Z (230 aa).

Helical transmembrane passes span 9-29 and 35-55; these read AELI…VLAA and IGVL…AFAI. An NPA 1 motif is present at residues 64-66; that stretch reads NPA. Helical transmembrane passes span 83-103, 131-151, and 160-180; these read LPYV…IYLI, LGAG…VIMG, and GFAP…SIPV. Residues 186-188 carry the NPA 2 motif; that stretch reads NPA. Residues 194-214 form a helical membrane-spanning segment; the sequence is ALFVGGWALQQLWLFWVAPLI.

Belongs to the MIP/aquaporin (TC 1.A.8) family. As to quaternary structure, homotetramer.

The protein localises to the cell inner membrane. The catalysed reaction is H2O(in) = H2O(out). Its function is as follows. Channel that permits osmotically driven movement of water in both directions. It is involved in the osmoregulation and in the maintenance of cell turgor during volume expansion in rapidly growing cells. It mediates rapid entry or exit of water in response to abrupt changes in osmolarity. The sequence is that of Aquaporin Z from Pseudomonas putida (strain ATCC 47054 / DSM 6125 / CFBP 8728 / NCIMB 11950 / KT2440).